Consider the following 119-residue polypeptide: Large ribosomal subunit protein uL18 (119 aa).

Belongs to the universal ribosomal protein uL18 family. In terms of assembly, part of the 50S ribosomal subunit; part of the 5S rRNA/L5/L18/L25 subcomplex. Contacts the 5S and 23S rRNAs.

Its function is as follows. This is one of the proteins that bind and probably mediate the attachment of the 5S RNA into the large ribosomal subunit, where it forms part of the central protuberance. The sequence is that of Large ribosomal subunit protein uL18 from Xanthomonas axonopodis pv. citri (strain 306).